Reading from the N-terminus, the 250-residue chain is 2,3-bisphosphoglycerate-dependent phosphoglycerate mutase (250 aa).

Residues 10-17, 23-24, Arg-62, 89-92, Lys-100, 116-117, and 185-186 each bind substrate; these read RHGESQWN, TG, ERHY, RR, and GN. His-11 functions as the Tele-phosphohistidine intermediate in the catalytic mechanism. Glu-89 serves as the catalytic Proton donor/acceptor.

This sequence belongs to the phosphoglycerate mutase family. BPG-dependent PGAM subfamily. As to quaternary structure, homodimer.

It catalyses the reaction (2R)-2-phosphoglycerate = (2R)-3-phosphoglycerate. It functions in the pathway carbohydrate degradation; glycolysis; pyruvate from D-glyceraldehyde 3-phosphate: step 3/5. Functionally, catalyzes the interconversion of 2-phosphoglycerate and 3-phosphoglycerate. The protein is 2,3-bisphosphoglycerate-dependent phosphoglycerate mutase of Yersinia pseudotuberculosis serotype IB (strain PB1/+).